A 352-amino-acid polypeptide reads, in one-letter code: Pheromone-regulated membrane protein 6 (352 aa).

The Extracellular portion of the chain corresponds to 1-36 (MESSLQKLKFQDIDINLIPTAKWTTKLQYILYTWCQ). The helical transmembrane segment at 37–57 (SILHVAMFFSDIYTCIKLLAF) threads the bilayer. At 58–76 (NTWSNNIIQPFLEFRISKW) the chain is on the cytoplasmic side. A helical membrane pass occupies residues 77 to 97 (LFSGCILCSSLILIWELVIGL). Topologically, residues 98 to 227 (RVYRKKEITS…VILSFMLFSF (130 aa)) are extracellular. Residues 228–248 (IIWVILISKLILSIIIFIIFI) form a helical membrane-spanning segment. The Cytoplasmic segment spans residues 249-352 (RPRFLSSKRK…FPQKYKHKYI (104 aa)).

It belongs to the KCH1 low affinity K(+) transporter family.

It is found in the cell membrane. Its subcellular location is the bud tip. The protein resides in the vacuole lumen. The catalysed reaction is K(+)(in) = K(+)(out). Its function is as follows. Low affinity potassium transporter that, with KCH1, participates in high-affinity Ca(2+) influx system (HACS) activation during the response to mating pheromone. Directly promotes K(+) influx and HACS may electrochemically respond to this K(+) influx. KCH1 and PRM6/KCH2 act at the apex of the calcium signaling pathway that is used for survival during prolonged exposures to mating pheromones. This Saccharomyces cerevisiae (strain ATCC 204508 / S288c) (Baker's yeast) protein is Pheromone-regulated membrane protein 6.